Reading from the N-terminus, the 157-residue chain is Thiocyanate hydrolase subunit beta (157 aa).

In terms of assembly, heterododecamer consisting of 4 alpha, 4 beta, and 4 gamma subunits.

The enzyme catalyses thiocyanate + H2O + 2 H(+) = carbonyl sulfide + NH4(+). It functions in the pathway organosulfur degradation; thiocyanate degradation. Functionally, involved in the degradation of thiocyanate. This is Thiocyanate hydrolase subunit beta (scnB) from Thiobacillus thioparus.